The chain runs to 390 residues: Chorismate synthase (390 aa).

The NADP(+) site is built by Arg-39 and Arg-45. FMN is bound by residues 132 to 134 (RSS), 253 to 254 (NA), Gly-298, 313 to 317 (KPIPT), and Arg-339.

Belongs to the chorismate synthase family. Homotetramer. The cofactor is FMNH2.

The enzyme catalyses 5-O-(1-carboxyvinyl)-3-phosphoshikimate = chorismate + phosphate. It functions in the pathway metabolic intermediate biosynthesis; chorismate biosynthesis; chorismate from D-erythrose 4-phosphate and phosphoenolpyruvate: step 7/7. Functionally, catalyzes the anti-1,4-elimination of the C-3 phosphate and the C-6 proR hydrogen from 5-enolpyruvylshikimate-3-phosphate (EPSP) to yield chorismate, which is the branch point compound that serves as the starting substrate for the three terminal pathways of aromatic amino acid biosynthesis. This reaction introduces a second double bond into the aromatic ring system. The chain is Chorismate synthase from Bacillus licheniformis (strain ATCC 14580 / DSM 13 / JCM 2505 / CCUG 7422 / NBRC 12200 / NCIMB 9375 / NCTC 10341 / NRRL NRS-1264 / Gibson 46).